A 261-amino-acid chain; its full sequence is Cytochrome c oxidase subunit 3 (261 aa).

Residues 1-15 (MTHQTHAYHMVNPSP) are Mitochondrial matrix-facing. The chain crosses the membrane as a helical span at residues 16-34 (WPLTGALSALLMTSGLIMW). Residues 35–40 (FHFNSM) are Mitochondrial intermembrane-facing. Residues 41 to 66 (YLLMLGLTTNTLTMYQWWRDIVREST) traverse the membrane as a helical segment. At 67–72 (FQGHHT) the chain is on the mitochondrial matrix side. Residues 73–105 (PIVQKGLRYGMILFIVSEVFFFAGFFWAFYHSS) form a helical membrane-spanning segment. Residues 106 to 128 (LAPTPELGGCWPPTGITPLNPME) lie on the Mitochondrial intermembrane side of the membrane. A helical membrane pass occupies residues 129–152 (VPLLNTSVLLASGVSITWAHHSLM). Residues 153 to 155 (EGN) are Mitochondrial matrix-facing. Residues 156 to 183 (RKHMLQALFITISLGVYFTLLQASEYYE) form a helical membrane-spanning segment. Residues 184-190 (TPFTISD) are Mitochondrial intermembrane-facing. A helical membrane pass occupies residues 191–223 (GIYGSTFFMATGFHGLHVIIGSTFLIVCFMRQL). The Mitochondrial matrix segment spans residues 224 to 232 (KFHFTSNHH). A helical transmembrane segment spans residues 233-256 (FGFEAAAWYWHFVDVVWLFLYVSI). The Mitochondrial intermembrane segment spans residues 257–261 (YWWGS).

The protein belongs to the cytochrome c oxidase subunit 3 family. Component of the cytochrome c oxidase (complex IV, CIV), a multisubunit enzyme composed of 14 subunits. The complex is composed of a catalytic core of 3 subunits MT-CO1, MT-CO2 and MT-CO3, encoded in the mitochondrial DNA, and 11 supernumerary subunits COX4I, COX5A, COX5B, COX6A, COX6B, COX6C, COX7A, COX7B, COX7C, COX8 and NDUFA4, which are encoded in the nuclear genome. The complex exists as a monomer or a dimer and forms supercomplexes (SCs) in the inner mitochondrial membrane with NADH-ubiquinone oxidoreductase (complex I, CI) and ubiquinol-cytochrome c oxidoreductase (cytochrome b-c1 complex, complex III, CIII), resulting in different assemblies (supercomplex SCI(1)III(2)IV(1) and megacomplex MCI(2)III(2)IV(2)).

It is found in the mitochondrion inner membrane. It carries out the reaction 4 Fe(II)-[cytochrome c] + O2 + 8 H(+)(in) = 4 Fe(III)-[cytochrome c] + 2 H2O + 4 H(+)(out). Component of the cytochrome c oxidase, the last enzyme in the mitochondrial electron transport chain which drives oxidative phosphorylation. The respiratory chain contains 3 multisubunit complexes succinate dehydrogenase (complex II, CII), ubiquinol-cytochrome c oxidoreductase (cytochrome b-c1 complex, complex III, CIII) and cytochrome c oxidase (complex IV, CIV), that cooperate to transfer electrons derived from NADH and succinate to molecular oxygen, creating an electrochemical gradient over the inner membrane that drives transmembrane transport and the ATP synthase. Cytochrome c oxidase is the component of the respiratory chain that catalyzes the reduction of oxygen to water. Electrons originating from reduced cytochrome c in the intermembrane space (IMS) are transferred via the dinuclear copper A center (CU(A)) of subunit 2 and heme A of subunit 1 to the active site in subunit 1, a binuclear center (BNC) formed by heme A3 and copper B (CU(B)). The BNC reduces molecular oxygen to 2 water molecules using 4 electrons from cytochrome c in the IMS and 4 protons from the mitochondrial matrix. This chain is Cytochrome c oxidase subunit 3 (MT-CO3), found in Halichoerus grypus (Gray seal).